The chain runs to 529 residues: Calcium/calmodulin-dependent protein kinase type II subunit gamma (529 aa).

One can recognise a Protein kinase domain in the interval 14 to 272 (YQLFEELGKG…ADQALKHPWV (259 aa)). ATP is bound by residues 20 to 28 (LGKGAFSVV) and K43. D136 acts as the Proton acceptor in catalysis. An autoinhibitory domain region spans residues 283–292 (HRQETVECLR). T287, T306, and T307 each carry phosphothreonine; by autocatalysis. Residues 294–316 (FNARRKLKGAILTTMLVSRNFSA) form a calmodulin-binding region. 5 positions are modified to phosphoserine: S311, S334, S349, S352, and S455. The tract at residues 324-353 (KSDGGVKKRKSSSSVHLMPQSNNKNSLVSP) is disordered. The span at 342–352 (PQSNNKNSLVS) shows a compositional bias: polar residues.

This sequence belongs to the protein kinase superfamily. CAMK Ser/Thr protein kinase family. CaMK subfamily. As to quaternary structure, CAMK2 is composed of 4 different chains: alpha (CAMK2A), beta (CAMK2B), gamma (CAMK2G), and delta (CAMK2D). The different isoforms assemble into homo- or heteromultimeric holoenzymes composed of 12 subunits with two hexameric rings stacked one on top of the other. Post-translationally, autophosphorylation of Thr-287 following activation by Ca(2+)/calmodulin. Phosphorylation of Thr-287 locks the kinase into an activated state.

Its subcellular location is the sarcoplasmic reticulum membrane. It carries out the reaction L-seryl-[protein] + ATP = O-phospho-L-seryl-[protein] + ADP + H(+). The catalysed reaction is L-threonyl-[protein] + ATP = O-phospho-L-threonyl-[protein] + ADP + H(+). Its activity is regulated as follows. Activated by Ca(2+)/calmodulin. Binding of calmodulin results in conformational change that relieves intrasteric autoinhibition and allows autophosphorylation of Thr-287 which turns the kinase in a constitutively active form and confers to the kinase a Ca(2+)-independent activity. Calcium/calmodulin-dependent protein kinase that functions autonomously after Ca(2+)/calmodulin-binding and autophosphorylation, and is involved in sarcoplasmic reticulum Ca(2+) transport in skeletal muscle and may function in dendritic spine and synapse formation and neuronal plasticity. In slow-twitch muscles, is involved in regulation of sarcoplasmic reticulum (SR) Ca(2+) transport and in fast-twitch muscle participates in the control of Ca(2+) release from the SR through phosphorylation of the ryanodine receptor-coupling factor triadin. In the central nervous system, it is involved in the regulation of neurite formation and arborization. It may participate in the promotion of dendritic spine and synapse formation and maintenance of synaptic plasticity which enables long-term potentiation (LTP) and hippocampus-dependent learning. In response to interferon-gamma (IFN-gamma) stimulation, catalyzes phosphorylation of STAT1, stimulating the JAK-STAT signaling pathway. The chain is Calcium/calmodulin-dependent protein kinase type II subunit gamma (Camk2g) from Mus musculus (Mouse).